The sequence spans 263 residues: Metaxin-2 (263 aa).

The residue at position 2 (S2) is an N-acetylserine.

It belongs to the metaxin family. As to quaternary structure, interacts with MTX1/metaxin-1. Associates with the mitochondrial contact site and cristae organizing system (MICOS) complex, composed of at least MICOS10/MIC10, CHCHD3/MIC19, CHCHD6/MIC25, APOOL/MIC27, IMMT/MIC60, APOO/MIC23/MIC26 and QIL1/MIC13. This complex was also known under the names MINOS or MitOS complex. The MICOS complex associates with mitochondrial outer membrane proteins SAMM50, MTX1 and MTX2 (together described as components of the mitochondrial outer membrane sorting assembly machinery (SAM) complex) and DNAJC11, mitochondrial inner membrane protein TMEM11 and with HSPA9. The MICOS and SAM complexes together with DNAJC11 are part of a large protein complex spanning both membranes termed the mitochondrial intermembrane space bridging (MIB) complex.

The protein localises to the mitochondrion outer membrane. It is found in the mitochondrion. Functionally, involved in transport of proteins into the mitochondrion. In Homo sapiens (Human), this protein is Metaxin-2 (MTX2).